Here is a 129-residue protein sequence, read N- to C-terminus: Large-conductance mechanosensitive channel (129 aa).

3 consecutive transmembrane segments (helical) span residues 8-28, 30-50, and 67-87; these read FAFR…AAFS, IIKS…IGGI, and GQFL…FLFV.

This sequence belongs to the MscL family. As to quaternary structure, homopentamer.

It localises to the cell membrane. Channel that opens in response to stretch forces in the membrane lipid bilayer. May participate in the regulation of osmotic pressure changes within the cell. The sequence is that of Large-conductance mechanosensitive channel from Exiguobacterium sibiricum (strain DSM 17290 / CCUG 55495 / CIP 109462 / JCM 13490 / 255-15).